A 69-amino-acid chain; its full sequence is Protein transport protein Sec61 subunit gamma (69 aa).

Residues 1–40 lie on the Cytoplasmic side of the membrane; that stretch reads MDILEETAAPLKDFAKNSIRLFKKCTKPDAQEFQKIALAT. Residues 41-61 traverse the membrane as a helical segment; it reads LIGFAIMGFIGFFVKLIHIPI. Residues 62–69 lie on the Extracellular side of the membrane; that stretch reads NNILVGGV.

It belongs to the SecE/SEC61-gamma family. In terms of assembly, heterotrimeric complex composed of SEC61-alpha, SEC61-beta and SEC61-gamma.

Its subcellular location is the endoplasmic reticulum membrane. Necessary for protein translocation in the endoplasmic reticulum. The polypeptide is Protein transport protein Sec61 subunit gamma (sec61g) (Dictyostelium discoideum (Social amoeba)).